The chain runs to 2897 residues: MTDPMMDFFDDANLFGETLEGLSDDAFVQPGPVSLVDELNLGAEFEPLHIDSLNHVQGTPTHQKMTDFEQLNQFDSIKFHHVNQSFGSPAEHVLSPHSQFNCSPIHPQNQPNGLFPDVSDGSPMWGHQTATTISNQNGSPFHQQGHSHSMHQNKSFVAHHDFALFQANEQQTQCTSLRSQQNRNNLNPGQNSLSQSKNFMNVSGPHRVNVNHPPQMTNASNSQQSISMQQFSQTSNPSAHFHKCSSHQEGNFNGPSPNMTSCSVSNSQQFSSHYSFSSNHISPNSLLQSSAVLASNHTNQTLSDFTGSNSFSPHRGIKQESTQHILNPNTSLNSNNFQILHSSHPQGNYSNSKLSPVHMNFPDPVDSGTQMGHFNDHVETNGFSSLEENLLHQVESQTEPFTGLDPEDLLQEGLLPHFDESTFGQDNSSHILDHDLDRQFTSHLVTRPSDMAQTQLQSQARSWHSSFSNHQHLHDRNHLCLQRQPPSSKKSDGSGTYTKLQNTQVRVMSEKKQRKKVESESKQEKANRIISEAIAKAKERGERNIPRVMSPENFPTASVEGKEEKKGRRMKSKPKDKDSKKTKTCSKLKEKTKIGKLIITLGKKQKRKNESSDEISDAEQMPQHTLKDQDSQKRRSNRQIKRKKYAEDIEGKQSEEEVKGSMKIKKNSAPLPGEQPLQLFVENPSEEDAAIVDKILSSRTVKKEISPGVMIDTEEFFVKYKNYSYLHCEWATEEQLLKDKRIQQKIKRFKLRQAQRAHFFADMEEEPFNPDYVEVDRVLEVSFCEDKDTGEPVIYYLVKWCSLPYEDSTWELKEDVDLAKIEEFEQLQASRPDTRRLDRPPSNIWKKIDQSRDYKNGNQLREYQLEGLNWLLFNWYNRRNCILADEMGLGKTIQSITFLYEILLTGIRGPFLIIAPLSTIANWEREFRTWTDINVVVYHGSLISRQMIQQYEMYFRDSQGRIIRGAYRFQAIITTFEMILGGCGELNAIEWRCVIIDEAHRLKNKNCKLLEGLKLMNLEHKVLLTGTPLQNTVEELFSLLHFLEPLRFPSESTFMQEFGDLKTEEQVQKLQAILKPMMLRRLKEDVEKKLAPKEETIIEVELTNIQKKYYRAILEKNFSFLSKGAGQTNVPNLVNTMMELRKCCNHPYLIKGAEEKILGEFRDTYNPAASDFHLQAMIQSAGKLVLIDKLLPKMKAGGHKVLIFSQMVRCLDILEDYLIHKRYLYERIDGRVRGNLRQAAIDRFSKPDSDRFVFLLCTRAGGLGINLTAADTCIIFDSDWNPQNDLQAQARCHRIGQNKAVKVYRLVTRNSYEREMFDRASLKLGLDKAVLQSMSGRESNVGGIQQLSKKEIEDLLRRGAYGAIMEEEDEGSKFCEEDIDQILLRRTKTITIESEGRGSTFAKASFVASGNRTDISLDDPNFWQKWAKKAEIDIEAISGRNSLVIDTPRIRKQTRPFSATKDELAELSEAESEGDEKPKLRRPCDRSNGYGRTECFRVEKNLLVYGWGRWREILSHGRFKRQLNEHDVEIICRALLAYCLVHYRGDEKIKGFIWDLITPTEDGQTRELQNHLGLSAPVPRGRKGKKVKTQTSSFDIQKAEWLRKYNPEQLLQDEGYKKHIKHHCNKVLLRVRMLYYLKQEVIGNECQKVFDGVDASDIDVWVPEPDHSEVPAEWWDFDADKSLLIGVFKHGYEKYNTIRADPALCFLERVGKPDEKAVAAEQRANDYMDGDVEDPEYKPAPAIFKDDIEDDVSSPGDLVIADGDGQLMEGDKVYWPTQSALTTRLRRLITAYQRTNKNRQIQQIQPTFSVPTSVMQPIYEEATLNPKMAAKIERQQRWTRREEADFYRVVSTFGVVFDPDRGQFDWTKFRAMARLHKKTDDSLEKYLYAFMSMCRRVCRLPSKEELVDPNIFIQPITEERASRTLYRIELLRKVREQALRHPQLFERLKLCHPNPDLPVWWECGPHDRDLLIGAAKHGVSRTDYHILRDPELSFMAAQRNYSQSKMAHSRTSTPLLQQYQVALSASPLTSLPRLLDAKGIILEEMKVKSENLKEEPQSSEEESMSSVETRTLIKSEPVSPKNGVLPQATGDQKSGGKCETDRRMVAARTEPLTPNPASKKPRVHKRGSESSSDSDSDSERSSCSSRSSSSSSSSSCSHSRSGSSSSSSSSCSSASSSSSSSTSSSSSSSSSSSEESDSDEEEAQKRESTTHMKAYDEESVASLSTTQDETQDSFQMNNGTPESAYILQGGYMLAASYWPKDRVMINRLDSICQTVLKGKWPSARRSYDANTVASFYTTKLLDSPGAATEYSDPSVPTPPGAGVKEEHDQSTQMSKVKKHVREKEFTVKIKDEGGLKLTFQKQGLAQKRPFDGEDGALGQQQYLTRLRELQSASETSLVNFPKSIPVSGTSIQPTLGANGVILDNQPIVKKRRGRRKNVEGVDIFFFNRNKPPNHVSLGLTSSQISTGINPALSYTQPQGIPDTESPVPVINLKDGTRLAGDDAPKRKDLEKWLKEHPGYVEDLGAFIPRMQLHEGRPKQKRHRCRNPNKLDVNSLTGEERVQLINRRNARKVGGAFAPPLKDLCRFLKENSEYGVAPEWGDVVKQSGFLPESMYERILTGPVVREEVSRRGRRPKSGIAKATAAAAAASATSVSGNPLLANGLLPGVDLTTLQALQQNLQNLQSLQVTAGLMGMPTGLPSGGEAKNMAAMFPMLLSGMAGLPNLLGMGGLLTKPTESGTEDKKGSDSKESEGKTERTESQSSENGGENSVSSSPSTSSTAALNTAAAANPLALNPLLLSNILYPGMLLTPGLNLHIPTLSQSNTFDVQNKNSDLGSSKSVEVKEEDSRIKDQEDKGGTEPSPLNENSTDEGSEKADASSGSDSTSSSSEDSDSSNED.

A compositionally biased stretch (polar residues) spans 173–201 (QCTSLRSQQNRNNLNPGQNSLSQSKNFMN). Disordered regions lie at residues 173-265 (QCTS…CSVS), 482-525 (QRQP…KQEK), and 537-671 (AKER…SAPL). Residue Lys197 forms a Glycyl lysine isopeptide (Lys-Gly) (interchain with G-Cter in SUMO2) linkage. Residues 220–235 (SNSQQSISMQQFSQTS) are compositionally biased toward low complexity. Composition is skewed to polar residues over residues 247–260 (HQEG…PNMT) and 484–506 (QPPS…TQVR). An N6-acetyllysine modification is found at Lys499. Basic and acidic residues predominate over residues 508–525 (MSEKKQRKKVESESKQEK). Ser550 bears the Phosphoserine mark. The segment covering 573–593 (KPKDKDSKKTKTCSKLKEKTK) has biased composition (basic and acidic residues). Residue Lys596 forms a Glycyl lysine isopeptide (Lys-Gly) (interchain with G-Cter in SUMO2) linkage. At Ser611 the chain carries Phosphoserine. Positions 634–644 (RRSNRQIKRKK) are enriched in basic residues. Basic and acidic residues predominate over residues 645 to 660 (YAEDIEGKQSEEEVKG). Chromo domains are found at residues 690–761 (AIVD…HFFA) and 773–839 (VEVD…RLDR). The short motif at 868–872 (LNWLL) is the LXXLL motif 1 element. A Helicase ATP-binding domain is found at 872 to 1046 (LFNWYNRRNC…FSLLHFLEPL (175 aa)). 885–892 (DEMGLGKT) is a binding site for ATP. The short motif at 997–1000 (DEAH) is the DEAH box element. An LXXLL motif 2 motif is present at residues 1036 to 1040 (LFSLL). The 152-residue stretch at 1186-1337 (LIDKLLPKMK…KAVLQSMSGR (152 aa)) folds into the Helicase C-terminal domain. The disordered stretch occupies residues 1461–1484 (KDELAELSEAESEGDEKPKLRRPC). The segment covering 1465 to 1474 (AELSEAESEG) has biased composition (acidic residues). 2 positions are modified to phosphoserine: Ser1468 and Ser1472. A compositionally biased stretch (basic and acidic residues) spans 1475 to 1484 (DEKPKLRRPC). Residues Lys1588, Lys1738, and Lys1903 each participate in a glycyl lysine isopeptide (Lys-Gly) (interchain with G-Cter in SUMO2) cross-link. Phosphoserine is present on Ser2026. An LXXLL motif 3 motif is present at residues 2031-2035 (LPRLL). Lys2038 participates in a covalent cross-link: Glycyl lysine isopeptide (Lys-Gly) (interchain with G-Cter in SUMO2). 2 disordered regions span residues 2050 to 2238 (ENLK…QMNN) and 2305 to 2337 (GAAT…SKVK). A phosphoserine mark is found at Ser2058 and Ser2059. Lys2074 is covalently cross-linked (Glycyl lysine isopeptide (Lys-Gly) (interchain with G-Cter in SUMO2)). Phosphoserine occurs at positions 2075 and 2079. The segment covering 2094 to 2104 (SGGKCETDRRM) has biased composition (basic and acidic residues). The span at 2141 to 2193 (SSCSSRSSSSSSSSSCSHSRSGSSSSSSSSCSSASSSSSSSTSSSSSSSSSSS) shows a compositional bias: low complexity. Residues 2203-2216 (AQKRESTTHMKAYD) are compositionally biased toward basic and acidic residues. Residues 2221 to 2238 (ASLSTTQDETQDSFQMNN) are compositionally biased toward polar residues. Positions 2332–2481 (QMSKVKKHVR…LSYTQPQGIP (150 aa)) are binds A/T-rich DNA. Glycyl lysine isopeptide (Lys-Gly) (interchain with G-Cter in SUMO2) cross-links involve residues Lys2350, Lys2356, and Lys2361. The a.T hook-like stretch occupies residues 2429-2436 (KKRRGRRK). Positions 2721-2725 (LPNLL) match the LXXLL motif 4 motif. The tract at residues 2729–2777 (GLLTKPTESGTEDKKGSDSKESEGKTERTESQSSENGGENSVSSSPSTS) is disordered. Positions 2739–2758 (TEDKKGSDSKESEGKTERTE) are enriched in basic and acidic residues. Residues 2759–2777 (SQSSENGGENSVSSSPSTS) are compositionally biased toward low complexity. An LXXLL motif 5 motif is present at residues 2793 to 2797 (LNPLL). The disordered stretch occupies residues 2827–2897 (VQNKNSDLGS…SEDSDSSNED (71 aa)). Residues 2840 to 2857 (VEVKEEDSRIKDQEDKGG) show a composition bias toward basic and acidic residues. Lys2843 is covalently cross-linked (Glycyl lysine isopeptide (Lys-Gly) (interchain with G-Cter in SUMO2)). A compositionally biased stretch (low complexity) spans 2877-2888 (ASSGSDSTSSSS).

The protein belongs to the SNF2/RAD54 helicase family. As to quaternary structure, interacts with PPARA. Probably interacts with ESR1 and NR1I3. Phosphorylated on serine and tyrosine residues. As to expression, widely expressed at low levels. In bone marrow, expression is restricted to osteoprogenitor cells adjacent to mature osteoblasts.

Its subcellular location is the cytoplasm. The protein localises to the nucleus. It catalyses the reaction ATP + H2O = ADP + phosphate + H(+). Functionally, probable ATP-dependent chromatin-remodeling factor. Acts as a transcriptional coactivator for PPARA and possibly other nuclear receptors. Has DNA-dependent ATPase activity and binds to A/T-rich DNA. Associates with A/T-rich regulatory regions in promoters of genes that participate in the differentiation of progenitors during osteogenesis. This Homo sapiens (Human) protein is Chromodomain-helicase-DNA-binding protein 9 (CHD9).